Here is a 174-residue protein sequence, read N- to C-terminus: Period clock protein (174 aa).

Positions 46–134 are disordered; the sequence is SSEGTGAGTG…GTGTGTGTGT (89 aa). Tandem repeats lie at residues 49–50, 51–52, 53–54, 55–56, 57–58, 59–60, 61–62, 63–64, 65–66, 67–68, 69–70, 71–72, 73–74, 75–76, 77–78, 79–80, 81–82, 83–84, 85–86, 87–88, 89–90, 91–92, 93–94, 95–96, 97–98, 99–100, 101–102, 103–104, 105–106, 107–108, 109–110, 111–112, 113–114, 115–116, 117–118, 119–120, 121–122, 123–124, 125–126, 127–128, 129–130, 131–132, 133–134, 135–136, and 137–138. The interval 49 to 138 is 45 X 2 AA tandem repeats of G-[TA]; that stretch reads GTGAGTGTGT…GTGTGTGTGT (90 aa). The segment covering 50-134 has biased composition (gly residues); that stretch reads TGAGTGTGTG…GTGTGTGTGT (85 aa).

The protein localises to the plastid. Its subcellular location is the chloroplast. The sequence is that of Period clock protein from Acetabularia acetabulum (Mermaid's wine glass).